The following is a 96-amino-acid chain: Guanine nucleotide-binding protein alpha-9 subunit (96 aa).

One can recognise a G-alpha domain in the interval 2–96; sequence YFHSTAIILF…ISASLKMVGV (95 aa). Positions 9–16 are G1 motif; sequence ILFLNKID. GTP is bound by residues 13 to 16 and A69; that span reads NKID. The segment at 67–72 is G2 motif; sequence TSATDT.

It belongs to the G-alpha family. In terms of assembly, g proteins are composed of 3 units; alpha, beta and gamma. The alpha chain contains the guanine nucleotide binding site. Expressed in ASJ neurons.

Its function is as follows. Guanine nucleotide-binding proteins (G proteins) are involved as modulators or transducers in various transmembrane signaling systems. Plays a role in innate immunity and maintaining survival in response to metabolites of E.coli. This might be by regulating the expression and signaling of genes such as lys-8, ins-7 and daf-28. Has a role in lifespan to promote longevity. In Caenorhabditis elegans, this protein is Guanine nucleotide-binding protein alpha-9 subunit.